We begin with the raw amino-acid sequence, 321 residues long: Replication factor C small subunit (321 aa).

46-53 (GPAGVGKT) lines the ATP pocket.

The protein belongs to the activator 1 small subunits family. RfcS subfamily. In terms of assembly, heterohexamer composed of four small subunits (RfcS) and two large subunits (RfcL).

Part of the RFC clamp loader complex which loads the PCNA sliding clamp onto DNA. The complex possesses DNA-dependent ATPase activity which is further stimulated by PCNA. In conjunction with PCNA stimulates DNA synthesis by PolB, relieving inhibition by replication protein A (RPA). The chain is Replication factor C small subunit (rfcS) from Methanothermobacter thermautotrophicus (strain ATCC 29096 / DSM 1053 / JCM 10044 / NBRC 100330 / Delta H) (Methanobacterium thermoautotrophicum).